Here is a 237-residue protein sequence, read N- to C-terminus: NAD-dependent protein deacetylase (237 aa).

The 237-residue stretch at Met1–Ala237 folds into the Deacetylase sirtuin-type domain. The NAD(+) site is built by Ala18, Thr22, Phe29, Arg30, Gln95, Asp98, and His113. Phe29 provides a ligand contact to nicotinamide. Position 98 (Asp98) interacts with nicotinamide. The active-site Proton acceptor is the His113. 4 residues coordinate Zn(2+): Cys121, Cys124, Cys140, and Cys142. The NAD(+) site is built by Ser180, Ser181, Asn205, and Ile224.

The protein belongs to the sirtuin family. Class U subfamily. Zn(2+) serves as cofactor.

It localises to the cytoplasm. It carries out the reaction N(6)-acetyl-L-lysyl-[protein] + NAD(+) + H2O = 2''-O-acetyl-ADP-D-ribose + nicotinamide + L-lysyl-[protein]. NAD-dependent protein deacetylase which modulates the activities of several enzymes which are inactive in their acetylated form. The chain is NAD-dependent protein deacetylase from Halalkalibacterium halodurans (strain ATCC BAA-125 / DSM 18197 / FERM 7344 / JCM 9153 / C-125) (Bacillus halodurans).